A 449-amino-acid polypeptide reads, in one-letter code: Tubulin alpha-1B chain (449 aa).

GTP is bound at residue Gln-11. Residue Lys-40 is modified to N6-acetyllysine. GTP-binding residues include Glu-71, Ser-140, Gly-144, Thr-145, Thr-179, Asn-206, and Asn-228. Glu-71 serves as a coordination point for Mg(2+). Residue Glu-254 is part of the active site.

It belongs to the tubulin family. As to quaternary structure, dimer of alpha and beta chains. A typical microtubule is a hollow water-filled tube with an outer diameter of 25 nm and an inner diameter of 15 nM. Alpha-beta heterodimers associate head-to-tail to form protofilaments running lengthwise along the microtubule wall with the beta-tubulin subunit facing the microtubule plus end conferring a structural polarity. Microtubules usually have 13 protofilaments but different protofilament numbers can be found in some organisms and specialized cells. Mg(2+) serves as cofactor. Acetylation of alpha chains at Lys-40 stabilizes microtubules and affects affinity and processivity of microtubule motors. This modification has a role in multiple cellular functions, ranging from cell motility, cell cycle progression or cell differentiation to intracellular trafficking and signaling.

It is found in the cytoplasm. The protein localises to the cytoskeleton. The protein resides in the spindle. It localises to the nucleus. The enzyme catalyses GTP + H2O = GDP + phosphate + H(+). In terms of biological role, tubulin is the major constituent of microtubules, a cylinder consisting of laterally associated linear protofilaments composed of alpha- and beta-tubulin heterodimers. Microtubules grow by the addition of GTP-tubulin dimers to the microtubule end, where a stabilizing cap forms. Below the cap, tubulin dimers are in GDP-bound state, owing to GTPase activity of alpha-tubulin. The chain is Tubulin alpha-1B chain (ALTBN) from Physarum polycephalum (Slime mold).